The chain runs to 284 residues: Acetylglutamate kinase (284 aa).

Residues 64 to 65, arginine 86, and asparagine 179 each bind substrate; that span reads GG.

It belongs to the acetylglutamate kinase family. ArgB subfamily.

The protein localises to the cytoplasm. It carries out the reaction N-acetyl-L-glutamate + ATP = N-acetyl-L-glutamyl 5-phosphate + ADP. It participates in amino-acid biosynthesis; L-arginine biosynthesis; N(2)-acetyl-L-ornithine from L-glutamate: step 2/4. Catalyzes the ATP-dependent phosphorylation of N-acetyl-L-glutamate. The sequence is that of Acetylglutamate kinase from Prochlorococcus marinus subsp. pastoris (strain CCMP1986 / NIES-2087 / MED4).